A 440-amino-acid chain; its full sequence is Eukaryotic translation initiation factor 3 subunit E (440 aa).

In terms of domain architecture, PCI spans 219-392 (VYFNYPKGRD…GQVVMGAKTT (174 aa)).

The protein belongs to the eIF-3 subunit E family. As to quaternary structure, component of the eukaryotic translation initiation factor 3 (eIF-3) complex.

The protein resides in the cytoplasm. Its function is as follows. Component of the eukaryotic translation initiation factor 3 (eIF-3) complex, which is involved in protein synthesis of a specialized repertoire of mRNAs and, together with other initiation factors, stimulates binding of mRNA and methionyl-tRNAi to the 40S ribosome. The eIF-3 complex specifically targets and initiates translation of a subset of mRNAs involved in cell proliferation. This Brugia malayi (Filarial nematode worm) protein is Eukaryotic translation initiation factor 3 subunit E.